Here is a 251-residue protein sequence, read N- to C-terminus: uncharacterized protein (251 aa).

This sequence belongs to the PaiB family.

This is an uncharacterized protein from Emericella nidulans (strain FGSC A4 / ATCC 38163 / CBS 112.46 / NRRL 194 / M139) (Aspergillus nidulans).